We begin with the raw amino-acid sequence, 401 residues long: 8-amino-7-oxononanoate synthase (401 aa).

Arginine 19 provides a ligand contact to substrate. 106 to 107 (GY) contacts pyridoxal 5'-phosphate. Position 131 (histidine 131) interacts with substrate. Pyridoxal 5'-phosphate-binding residues include serine 176, histidine 204, and threonine 233. Lysine 236 is subject to N6-(pyridoxal phosphate)lysine. Threonine 350 contributes to the substrate binding site.

Belongs to the class-II pyridoxal-phosphate-dependent aminotransferase family. BioF subfamily. In terms of assembly, homodimer. Requires pyridoxal 5'-phosphate as cofactor.

It carries out the reaction 6-carboxyhexanoyl-[ACP] + L-alanine + H(+) = (8S)-8-amino-7-oxononanoate + holo-[ACP] + CO2. The protein operates within cofactor biosynthesis; biotin biosynthesis. Functionally, catalyzes the decarboxylative condensation of pimeloyl-[acyl-carrier protein] and L-alanine to produce 8-amino-7-oxononanoate (AON), [acyl-carrier protein], and carbon dioxide. The protein is 8-amino-7-oxononanoate synthase of Pseudomonas paraeruginosa (strain DSM 24068 / PA7) (Pseudomonas aeruginosa (strain PA7)).